Consider the following 209-residue polypeptide: Orotate phosphoribosyltransferase (209 aa).

Residues Arg96, Lys100, His102, and 122–130 (EDLISTGGS) contribute to the 5-phospho-alpha-D-ribose 1-diphosphate site. Ser126 lines the orotate pocket.

This sequence belongs to the purine/pyrimidine phosphoribosyltransferase family. PyrE subfamily. Homodimer. The cofactor is Mg(2+).

It carries out the reaction orotidine 5'-phosphate + diphosphate = orotate + 5-phospho-alpha-D-ribose 1-diphosphate. It participates in pyrimidine metabolism; UMP biosynthesis via de novo pathway; UMP from orotate: step 1/2. Catalyzes the transfer of a ribosyl phosphate group from 5-phosphoribose 1-diphosphate to orotate, leading to the formation of orotidine monophosphate (OMP). The polypeptide is Orotate phosphoribosyltransferase (Streptococcus gordonii (strain Challis / ATCC 35105 / BCRC 15272 / CH1 / DL1 / V288)).